Consider the following 289-residue polypeptide: MKSGFISLIGRTNAGKSSLLNYLLNEKISMVSHKQNATRRKINGIVMHKDSQAIFIDTPGLHESNKTMNKLMVEAAIKSIGDCDLLLFVASVFDNIENYKKFLNLKKDAPHLIAITKIDEASDKEIFAKLNEYQIYSDEFKAIIPLSVKKQAYKNILLDEIYKYLPEHEYFYDPQYLTTANEREIFRDFILEAVYECVSDEVPYSTDVNVDKVVEKQNITEIYATIITDNEHHKAILIGKNGQTIKRIGINARKIINTLLNNKIFLKINVKIDKNWNSNESIIKKNFLY.

The Era-type G domain occupies 2-167 (KSGFISLIGR…LDEIYKYLPE (166 aa)). Residues 10-17 (GRTNAGKS) are G1. 10–17 (GRTNAGKS) contributes to the GTP binding site. The G2 stretch occupies residues 36 to 40 (NATRR). A G3 region spans residues 57 to 60 (DTPG). GTP contacts are provided by residues 57-61 (DTPGL) and 116-119 (TKID). A G4 region spans residues 116-119 (TKID). A G5 region spans residues 146-148 (LSV). The KH type-2 domain maps to 198 to 274 (VSDEVPYSTD…FLKINVKIDK (77 aa)).

It belongs to the TRAFAC class TrmE-Era-EngA-EngB-Septin-like GTPase superfamily. Era GTPase family. As to quaternary structure, monomer.

Its subcellular location is the cytoplasm. The protein resides in the cell inner membrane. Its function is as follows. An essential GTPase that binds both GDP and GTP, with rapid nucleotide exchange. Plays a role in 16S rRNA processing and 30S ribosomal subunit biogenesis and possibly also in cell cycle regulation and energy metabolism. The protein is GTPase Era of Campylobacter fetus subsp. fetus (strain 82-40).